Consider the following 317-residue polypeptide: L-lactate dehydrogenase (317 aa).

NAD(+) is bound by residues Val17, Asp38, Lys43, Tyr68, and 82–83 (GV). Arg91 is a substrate binding site. Residues Ser104, 121–123 (VSN), and Ser146 contribute to the NAD(+) site. Residue 123 to 126 (NPVD) coordinates substrate. 151-154 (DTSR) is a substrate binding site. Residues Lys156 and His171 each coordinate beta-D-fructose 1,6-bisphosphate. The active-site Proton acceptor is His178. Residue Tyr224 is modified to Phosphotyrosine. Thr233 lines the substrate pocket.

This sequence belongs to the LDH/MDH superfamily. LDH family. In terms of assembly, homotetramer.

The protein resides in the cytoplasm. The catalysed reaction is (S)-lactate + NAD(+) = pyruvate + NADH + H(+). It participates in fermentation; pyruvate fermentation to lactate; (S)-lactate from pyruvate: step 1/1. Allosterically activated by fructose 1,6-bisphosphate (FBP). Catalyzes the conversion of lactate to pyruvate. The polypeptide is L-lactate dehydrogenase (Clostridium perfringens (strain SM101 / Type A)).